The primary structure comprises 1006 residues: Phosphatidylinositol 4,5-bisphosphate 5-phosphatase A (1006 aa).

Residues 1-416 (MEGQSSRGSR…SSSPWSAQPT (416 aa)) form a disordered region. The segment covering 27–41 (VAQTGAPSKVDSSFQ) has biased composition (polar residues). R56 is modified (asymmetric dimethylarginine; alternate). An Omega-N-methylarginine; alternate modification is found at R56. R65 is subject to Omega-N-methylarginine. R76 is modified (asymmetric dimethylarginine). Asymmetric dimethylarginine; alternate is present on R83. At R83 the chain carries Omega-N-methylarginine; alternate. A compositionally biased stretch (polar residues) spans 94–112 (GQKTATAHRSSSLAPTSVG). An RSXSXX motif 1 motif is present at residues 102-107 (RSSSLA). A compositionally biased stretch (low complexity) spans 180–193 (LAASGLSLALASEE). The span at 196-209 (PELPSTPSPVPSPV) shows a compositional bias: pro residues. A compositionally biased stretch (low complexity) spans 210-234 (LSPTQEQALAPASTASGAASVGQTS). The segment covering 256–273 (PAQTSGPTGSPPCIQTSP) has biased composition (polar residues). Residues S291 and S324 each carry the phosphoserine modification. Residues 337-347 (VPPPLPKPPRS) show a composition bias toward pro residues. Residues 345-350 (PRSPSR) carry the SH3-binding motif. 2 stretches are compositionally biased toward low complexity: residues 348-360 (PSRS…NRSP) and 398-409 (TTSSSTSTLSSS). The RSXSXX motif 2 motif lies at 350–355 (RSPSHS). Residues 425–728 (ITVVTWNVGT…SDHKPVAAQF (304 aa)) form a catalytic region. Positions 729 to 840 (LLQFAFRDDM…IGITEPFQIS (112 aa)) are required for ruffle localization. A compositionally biased stretch (low complexity) spans 844-858 (SELASSSTDSSGTSS). The tract at residues 844-1006 (SELASSSTDS…RGLEEGGLGP (163 aa)) is disordered. Short sequence motifs (RSXSXX motif) lie at residues 874–879 (RSPSPG) and 885–890 (RSRSPG). At S903 the chain carries Phosphoserine. Positions 911–916 (RSPSPQ) match the RSXSXX motif 5 motif. Residues 927-946 (RSSNGSSRGSSEEGPSGLPG) are compositionally biased toward low complexity. S990 carries the phosphoserine modification.

This sequence belongs to the inositol 1,4,5-trisphosphate 5-phosphatase type II family.

Its subcellular location is the cytoplasm. It carries out the reaction 1D-myo-inositol 1,4,5-trisphosphate + H2O = 1D-myo-inositol 1,4-bisphosphate + phosphate. The enzyme catalyses 1D-myo-inositol 1,3,4,5-tetrakisphosphate + H2O = 1D-myo-inositol 1,3,4-trisphosphate + phosphate. It catalyses the reaction a 1,2-diacyl-sn-glycero-3-phospho-(1D-myo-inositol-4,5-bisphosphate) + H2O = a 1,2-diacyl-sn-glycero-3-phospho-(1D-myo-inositol 4-phosphate) + phosphate. Functionally, inositol 5-phosphatase, which converts inositol 1,4,5-trisphosphate to inositol 1,4-bisphosphate. Also converts phosphatidylinositol 4,5-bisphosphate to phosphatidylinositol 4-phosphate and inositol 1,3,4,5-tetrakisphosphate to inositol 1,3,4-trisphosphate in vitro. May be involved in modulation of the function of inositol and phosphatidylinositol polyphosphate-binding proteins that are present at membranes ruffles. This Homo sapiens (Human) protein is Phosphatidylinositol 4,5-bisphosphate 5-phosphatase A (INPP5J).